The primary structure comprises 418 residues: UDP-N-acetylglucosamine 1-carboxyvinyltransferase (418 aa).

Phosphoenolpyruvate is bound at residue lysine 22–asparagine 23. Arginine 92 contacts UDP-N-acetyl-alpha-D-glucosamine. Cysteine 116 (proton donor) is an active-site residue. At cysteine 116 the chain carries 2-(S-cysteinyl)pyruvic acid O-phosphothioketal. UDP-N-acetyl-alpha-D-glucosamine is bound by residues arginine 121–leucine 125, aspartate 305, and leucine 327.

Belongs to the EPSP synthase family. MurA subfamily.

The protein resides in the cytoplasm. The enzyme catalyses phosphoenolpyruvate + UDP-N-acetyl-alpha-D-glucosamine = UDP-N-acetyl-3-O-(1-carboxyvinyl)-alpha-D-glucosamine + phosphate. It functions in the pathway cell wall biogenesis; peptidoglycan biosynthesis. Functionally, cell wall formation. Adds enolpyruvyl to UDP-N-acetylglucosamine. This chain is UDP-N-acetylglucosamine 1-carboxyvinyltransferase, found in Campylobacter jejuni (strain RM1221).